Consider the following 251-residue polypeptide: MSRYIGPRLRIIRRIGKLRGFTRKKPFRRSFRGRGALQGKVIPPGQHGLTKLFKSRPFDSNESDYLIRLKVKQRLRYNYGITEKQLVKYVRQAKKMKESTGQVLLQLLEMRLDNIVFRLNMAPTICAARQLISHGHIHVNSKKVNIASYMCKPKDVISVSMKQSSLKLVNRNLQEYSQKMSAYKKRLERTLAYVLFQRNISPNMANALEYINQGKVQVNNRKVLLPNYLCHSKDMISVKTDKGIRKFQFSE.

2 consecutive S4 RNA-binding domains span residues 110 to 170 (MRLD…KLVN) and 189 to 251 (RTLA…QFSE).

Belongs to the universal ribosomal protein uS4 family. As to quaternary structure, part of the 30S ribosomal subunit. Contacts protein S5. The interaction surface between S4 and S5 is involved in control of translational fidelity.

The protein resides in the plastid. It localises to the chloroplast. In terms of biological role, one of the primary rRNA binding proteins, it binds directly to 16S rRNA where it nucleates assembly of the body of the 30S subunit. Its function is as follows. With S5 and S12 plays an important role in translational accuracy. This chain is Small ribosomal subunit protein uS4c (rps4), found in Tetradesmus obliquus (Green alga).